The primary structure comprises 170 residues: Small ribosomal subunit protein bS16 (170 aa).

Residues 114–170 (EGGPTTEAAKPKKKAATSGAKKAAKAAEPEAAAPEAAEPEAAAPAEGGEQAESSTES) are disordered. The span at 142–170 (PEAAAPEAAEPEAAAPAEGGEQAESSTES) shows a compositional bias: low complexity.

This sequence belongs to the bacterial ribosomal protein bS16 family.

The polypeptide is Small ribosomal subunit protein bS16 (Mycobacterium avium (strain 104)).